A 623-amino-acid polypeptide reads, in one-letter code: Replication protein A 70 kDa DNA-binding subunit (623 aa).

An N-acetylmethionine modification is found at methionine 1. Residues lysine 22 and lysine 88 each participate in a glycyl lysine isopeptide (Lys-Gly) (interchain with G-Cter in ubiquitin) cross-link. Residues 116–163 (VPYNEGYGQQQQQQQQQQQQAVPSPASAATPPASKPQPQNGSLGMGST) form a disordered region. The segment covering 124 to 154 (QQQQQQQQQQQQAVPSPASAATPPASKPQPQ) has biased composition (low complexity). An N6-acetyllysine; alternate mark is found at lysine 172 and lysine 176. Residues lysine 172 and lysine 176 each participate in a glycyl lysine isopeptide (Lys-Gly) (interchain with G-Cter in ubiquitin); alternate cross-link. A Phosphothreonine modification is found at threonine 189. Lysine 192 participates in a covalent cross-link: Glycyl lysine isopeptide (Lys-Gly) (interchain with G-Cter in ubiquitin). At threonine 200 the chain carries Phosphothreonine. A DNA-binding region (OB) is located at residues 206 to 290 (WTICARVTNK…VKNDYEMTFN (85 aa)). Residues lysine 229 and lysine 253 each participate in a glycyl lysine isopeptide (Lys-Gly) (interchain with G-Cter in ubiquitin) cross-link. At lysine 268 the chain carries N6-acetyllysine; alternate. Residue lysine 268 forms a Glycyl lysine isopeptide (Lys-Gly) (interchain with G-Cter in ubiquitin); alternate linkage. Glycyl lysine isopeptide (Lys-Gly) (interchain with G-Cter in ubiquitin) cross-links involve residues lysine 276 and lysine 340. At serine 393 the chain carries Phosphoserine. A Glycyl lysine isopeptide (Lys-Gly) (interchain with G-Cter in ubiquitin) cross-link involves residue lysine 419. Lysine 458 participates in a covalent cross-link: Glycyl lysine isopeptide (Lys-Gly) (interchain with G-Cter in SUMO). Lysine 467 participates in a covalent cross-link: Glycyl lysine isopeptide (Lys-Gly) (interchain with G-Cter in ubiquitin). The C4-type zinc-finger motif lies at 490–512 (CPTQDCNKKVIDQQNGLYRCEKC). Lysine 562 participates in a covalent cross-link: Glycyl lysine isopeptide (Lys-Gly) (interchain with G-Cter in ubiquitin). Lysine 586 is covalently cross-linked (Glycyl lysine isopeptide (Lys-Gly) (interchain with G-Cter in SUMO)).

It belongs to the replication factor A protein 1 family. Component of the canonical replication protein A complex (RPA), a heterotrimer composed of RPA1, RPA2 and RPA3. The DNA-binding activity may reside exclusively on the RPA1 subunit. Interacts with PRPF19; the PRP19-CDC5L complex is recruited to the sites of DNA repair where it ubiquitinates the replication protein A complex (RPA). Interacts with RIPK1. Interacts with the polymerase alpha subunit POLA1/p180; this interaction stabilizes the replicative complex and reduces the misincorporation rate of DNA polymerase alpha by acting as a fidelity clamp. Interacts with RAD51 and SENP6 to regulate DNA repair. Interacts with HELB; this interaction promotes HELB recruitment to chromatin following DNA damage. Interacts with PRIMPOL; leading to recruit PRIMPOL on chromatin and stimulate its DNA primase activity. Interacts with XPA; the interaction is direct and associates XPA with the RPA complex. Interacts with ETAA1; the interaction is direct and promotes ETAA1 recruitment at stalled replication forks. Interacts with RPA1; this interaction associates HROB with the RPA complex. Interacts (when poly-ADP-ribosylated) with HTATSF1. DNA damage-induced 'Lys-63'-linked polyubiquitination by PRPF19 mediates ATRIP recruitment to the RPA complex at sites of DNA damage and activation of ATR. Ubiquitinated by RFWD3 at stalled replication forks in response to DNA damage: ubiquitination by RFWD3 does not lead to degradation by the proteasome and promotes removal of the RPA complex from stalled replication forks, promoting homologous recombination. Post-translationally, sumoylated on lysine residues Lys-458 and Lys-586, with Lys-458 being the major site. Sumoylation promotes recruitment of RAD51 to the DNA damage foci to initiate DNA repair through homologous recombination. Desumoylated by SENP6. In terms of processing, poly-ADP-ribosylated by PARP1; promoting recruitment of HTATSF1.

The protein localises to the nucleus. The protein resides in the PML body. Its function is as follows. As part of the heterotrimeric replication protein A complex (RPA/RP-A), binds and stabilizes single-stranded DNA intermediates, that form during DNA replication or upon DNA stress. It prevents their reannealing and in parallel, recruits and activates different proteins and complexes involved in DNA metabolism. Thereby, it plays an essential role both in DNA replication and the cellular response to DNA damage. In the cellular response to DNA damage, the RPA complex controls DNA repair and DNA damage checkpoint activation. Through recruitment of ATRIP activates the ATR kinase a master regulator of the DNA damage response. It is required for the recruitment of the DNA double-strand break repair factors RAD51 and RAD52 to chromatin in response to DNA damage. Also recruits to sites of DNA damage proteins like XPA and XPG that are involved in nucleotide excision repair and is required for this mechanism of DNA repair. Also plays a role in base excision repair (BER) probably through interaction with UNG. Also recruits SMARCAL1/HARP, which is involved in replication fork restart, to sites of DNA damage. May also play a role in telomere maintenance. This chain is Replication protein A 70 kDa DNA-binding subunit (Rpa1), found in Mus musculus (Mouse).